A 741-amino-acid polypeptide reads, in one-letter code: Beta-galactosidase 10 (741 aa).

The first 29 residues, 1-29 (MNRVTTESIASTAILVVMVFLFSWRSIEA), serve as a signal peptide directing secretion. N-linked (GlcNAc...) asparagine glycosylation occurs at Asn-31. The active-site Proton donor is the Glu-188. Glu-257 functions as the Nucleophile in the catalytic mechanism. Asn-358, Asn-396, Asn-469, Asn-525, and Asn-583 each carry an N-linked (GlcNAc...) asparagine glycan.

Belongs to the glycosyl hydrolase 35 family. As to expression, ubiquitous.

It localises to the secreted. The protein resides in the extracellular space. The protein localises to the apoplast. The enzyme catalyses Hydrolysis of terminal non-reducing beta-D-galactose residues in beta-D-galactosides.. In Arabidopsis thaliana (Mouse-ear cress), this protein is Beta-galactosidase 10 (BGAL10).